Here is a 255-residue protein sequence, read N- to C-terminus: MKGHVARKRFGQNFLVDQGIIAAIISAVDPKRDETVVEIGPGLGAITEPLMARVDHLHVIEIDRDLIARLKKQHTPERMTVHEGDALAFDFASIGKNLRLVGNLPYNISTPLLFHLAEYVDVVHDMHFMLQKEVVERMVAEPGNADFGRMSVMLQYRFYLEWLIDVPPESFDPPPKVQSAVVRLIPKPVSELNAKSQEKLSQVALTAFSQRRKMLRNTMKTLLSDAAFTELGIDPTCRPEDVSVEDYVRIANYLS.

S-adenosyl-L-methionine is bound by residues Asn13, Leu15, Gly40, Glu61, Asp85, and Asn103.

Belongs to the class I-like SAM-binding methyltransferase superfamily. rRNA adenine N(6)-methyltransferase family. RsmA subfamily.

Its subcellular location is the cytoplasm. The catalysed reaction is adenosine(1518)/adenosine(1519) in 16S rRNA + 4 S-adenosyl-L-methionine = N(6)-dimethyladenosine(1518)/N(6)-dimethyladenosine(1519) in 16S rRNA + 4 S-adenosyl-L-homocysteine + 4 H(+). In terms of biological role, specifically dimethylates two adjacent adenosines (A1518 and A1519) in the loop of a conserved hairpin near the 3'-end of 16S rRNA in the 30S particle. May play a critical role in biogenesis of 30S subunits. In Dechloromonas aromatica (strain RCB), this protein is Ribosomal RNA small subunit methyltransferase A.